Reading from the N-terminus, the 110-residue chain is MTITITDRAFERIYELIELEKDKNLVLRVSVDSGGCSGLMYNYELVSKDNIEKDDYVFTRHNATIIIDSISQKFMLNCTLDFIEELGSSYFNVSNPQAKAKCGCGNSFSV.

It belongs to the HesB/IscA family.

This is an uncharacterized protein from Rickettsia prowazekii (strain Madrid E).